The primary structure comprises 131 residues: UPF0102 protein AZC_4471 (131 aa).

Belongs to the UPF0102 family.

The sequence is that of UPF0102 protein AZC_4471 from Azorhizobium caulinodans (strain ATCC 43989 / DSM 5975 / JCM 20966 / LMG 6465 / NBRC 14845 / NCIMB 13405 / ORS 571).